The sequence spans 702 residues: Ribosomal RNA large subunit methyltransferase K/L (702 aa).

The THUMP domain maps to 43–154; sequence LIYQSLMWSR…KETASIALDL (112 aa).

Belongs to the methyltransferase superfamily. RlmKL family.

It is found in the cytoplasm. It carries out the reaction guanosine(2445) in 23S rRNA + S-adenosyl-L-methionine = N(2)-methylguanosine(2445) in 23S rRNA + S-adenosyl-L-homocysteine + H(+). The catalysed reaction is guanosine(2069) in 23S rRNA + S-adenosyl-L-methionine = N(2)-methylguanosine(2069) in 23S rRNA + S-adenosyl-L-homocysteine + H(+). Its function is as follows. Specifically methylates the guanine in position 2445 (m2G2445) and the guanine in position 2069 (m7G2069) of 23S rRNA. In Salmonella typhi, this protein is Ribosomal RNA large subunit methyltransferase K/L.